The chain runs to 184 residues: CASP-like protein 1U1 (184 aa).

The Cytoplasmic segment spans residues 1 to 30 (MSSTGTTLSASEGDKGFRNGAAPAKSKSHS). Residues 31 to 51 (TIALLRLLAFAATLSAFVTMI) form a helical membrane-spanning segment. Residues 52–76 (TNKQKITIGPFTRWSKWHYSDAFMW) are Extracellular-facing. Residues 77–97 (FVVANCIAFIYLLFAAILGLI) form a helical membrane-spanning segment. At 98 to 111 (SHSPMLVKHLVILD) the chain is on the cytoplasmic side. Residues 112–132 (LIVSYMLFSAASAATAVAYIG) traverse the membrane as a helical segment. The Extracellular segment spans residues 133–154 (KNGISQPGWTAICGVFERYCHH). Residues 155–175 (VAGALVACFLGWLFLTIAVFL) traverse the membrane as a helical segment. The Cytoplasmic segment spans residues 176–184 (GMRRSPAAV).

Belongs to the Casparian strip membrane proteins (CASP) family. As to quaternary structure, homodimer and heterodimers.

It localises to the cell membrane. The chain is CASP-like protein 1U1 from Marchantia polymorpha (Common liverwort).